We begin with the raw amino-acid sequence, 505 residues long: Lysine--tRNA ligase 1 (505 aa).

Mg(2+)-binding residues include aspartate 415 and glutamate 422.

This sequence belongs to the class-II aminoacyl-tRNA synthetase family. Homodimer. Mg(2+) is required as a cofactor.

The protein resides in the cytoplasm. The enzyme catalyses tRNA(Lys) + L-lysine + ATP = L-lysyl-tRNA(Lys) + AMP + diphosphate. The polypeptide is Lysine--tRNA ligase 1 (lysS1) (Mycobacterium bovis (strain ATCC BAA-935 / AF2122/97)).